The sequence spans 204 residues: Somatotropin (204 aa).

The first 17 residues, 1 to 17 (MDRAILLLSVVCLVVSS), serve as a signal peptide directing secretion. Glutamine 18 carries the pyrrolidone carboxylic acid modification. Residue histidine 36 coordinates Zn(2+). A disulfide bridge links cysteine 69 with cysteine 177. Residue glutamate 186 participates in Zn(2+) binding. Cysteine 194 and cysteine 202 are oxidised to a cystine.

This sequence belongs to the somatotropin/prolactin family.

The protein resides in the secreted. Growth hormone plays an important role in growth control and is involved in the regulation of several anabolic processes. Implicated as an osmoregulatory substance important for seawater adaptation. This is Somatotropin (gh) from Odontesthes argentinensis (Marine silverside).